The following is a 164-amino-acid chain: Transcriptional repressor NrdR (164 aa).

The segment at 3–34 is a zinc-finger region; it reads CPKCNYNKSSVVDSRQAEDGNTIRRRRECESC. The 91-residue stretch at 49–139 folds into the ATP-cone domain; sequence LLVIKKDGTR…VYKSFKDLDE (91 aa).

It belongs to the NrdR family. Zn(2+) serves as cofactor.

Negatively regulates transcription of bacterial ribonucleotide reductase nrd genes and operons by binding to NrdR-boxes. In Streptococcus equi subsp. zooepidemicus (strain H70), this protein is Transcriptional repressor NrdR.